The sequence spans 476 residues: Probable coniferyl aldehyde dehydrogenase (476 aa).

Catalysis depends on residues Glu225 and Cys259.

The protein belongs to the aldehyde dehydrogenase family. In terms of assembly, homodimer.

The enzyme catalyses (E)-coniferaldehyde + NADP(+) + H2O = (E)-ferulate + NADPH + 2 H(+). It carries out the reaction (E)-coniferaldehyde + NAD(+) + H2O = (E)-ferulate + NADH + 2 H(+). This is Probable coniferyl aldehyde dehydrogenase (calB) from Pseudomonas aeruginosa (strain ATCC 15692 / DSM 22644 / CIP 104116 / JCM 14847 / LMG 12228 / 1C / PRS 101 / PAO1).